Here is a 168-residue protein sequence, read N- to C-terminus: Nicotinamide-nucleotide adenylyltransferase (168 aa).

The protein belongs to the archaeal NMN adenylyltransferase family.

Its subcellular location is the cytoplasm. The enzyme catalyses beta-nicotinamide D-ribonucleotide + ATP + H(+) = diphosphate + NAD(+). The protein operates within cofactor biosynthesis; NAD(+) biosynthesis; NAD(+) from nicotinamide D-ribonucleotide: step 1/1. The polypeptide is Nicotinamide-nucleotide adenylyltransferase (Methanoculleus marisnigri (strain ATCC 35101 / DSM 1498 / JR1)).